We begin with the raw amino-acid sequence, 237 residues long: DNA repair protein RecO (237 aa).

The protein belongs to the RecO family.

Its function is as follows. Involved in DNA repair and RecF pathway recombination. The sequence is that of DNA repair protein RecO from Rickettsia peacockii (strain Rustic).